Here is a 382-residue protein sequence, read N- to C-terminus: S-adenosylmethionine synthase (382 aa).

Residue histidine 14 participates in ATP binding. Mg(2+) is bound at residue aspartate 16. Residue glutamate 42 participates in K(+) binding. The L-methionine site is built by glutamate 55 and glutamine 91. The segment at 91-101 is flexible loop; the sequence is QSENIAMGVNL. Residues 156–158, 222–223, aspartate 231, 237–238, alanine 254, and lysine 258 each bind ATP; these read DMK, KF, and RK. Aspartate 231 is an L-methionine binding site. Lysine 262 contributes to the L-methionine binding site.

The protein belongs to the AdoMet synthase family. Homotetramer; dimer of dimers. The cofactor is Mg(2+). K(+) is required as a cofactor.

The protein localises to the cytoplasm. The catalysed reaction is L-methionine + ATP + H2O = S-adenosyl-L-methionine + phosphate + diphosphate. It participates in amino-acid biosynthesis; S-adenosyl-L-methionine biosynthesis; S-adenosyl-L-methionine from L-methionine: step 1/1. Its function is as follows. Catalyzes the formation of S-adenosylmethionine (AdoMet) from methionine and ATP. The overall synthetic reaction is composed of two sequential steps, AdoMet formation and the subsequent tripolyphosphate hydrolysis which occurs prior to release of AdoMet from the enzyme. The polypeptide is S-adenosylmethionine synthase (Mycoplasmopsis synoviae (strain 53) (Mycoplasma synoviae)).